Reading from the N-terminus, the 393-residue chain is Inulin fructotransferase [DFA-I-forming] (393 aa).

It catalyses the reaction Produces alpha-D-fructofuranose beta-D-fructofuranose 1,2':2,1'-dianhydride (DFA I) by successively eliminating the diminishing (2-&gt;1)-beta-D-fructan (inulin) chain from the terminal D-fructosyl-D-fructosyl disaccharide.. This chain is Inulin fructotransferase [DFA-I-forming], found in Arthrobacter globiformis.